An 821-amino-acid polypeptide reads, in one-letter code: Lysosomal beta glucosidase (821 aa).

Residues 1–24 (MKTIKSLFLLSLLIVNLLISSTYG) form the signal peptide. A propeptide spanning residues 25–69 (SSIRVSIVGGEEAEVIEKPRTFGNKRELKLEYSQIYPKKQLNQEN) is cleaved from the precursor. Asn-113, Asn-146, and Asn-266 each carry an N-linked (GlcNAc...) asparagine glycan. The active site involves Asp-363. Residues Asn-535, Asn-555, Asn-703, and Asn-721 are each glycosylated (N-linked (GlcNAc...) asparagine).

The protein belongs to the glycosyl hydrolase 3 family. Post-translationally, glycosylated. The polyoligosaccharides are of the high-mannose type and are highly substituted with both phosphate and sulfate moieties.

Its subcellular location is the lysosome. The catalysed reaction is Hydrolysis of terminal, non-reducing beta-D-glucosyl residues with release of beta-D-glucose.. This chain is Lysosomal beta glucosidase (gluA), found in Dictyostelium discoideum (Social amoeba).